The chain runs to 287 residues: ATP synthase gamma chain (287 aa).

It belongs to the ATPase gamma chain family. In terms of assembly, F-type ATPases have 2 components, CF(1) - the catalytic core - and CF(0) - the membrane proton channel. CF(1) has five subunits: alpha(3), beta(3), gamma(1), delta(1), epsilon(1). CF(0) has three main subunits: a, b and c.

The protein resides in the cell inner membrane. Functionally, produces ATP from ADP in the presence of a proton gradient across the membrane. The gamma chain is believed to be important in regulating ATPase activity and the flow of protons through the CF(0) complex. This is ATP synthase gamma chain from Serratia proteamaculans (strain 568).